Consider the following 255-residue polypeptide: Defective in cullin neddylation protein 1 (255 aa).

In terms of domain architecture, UBA-like spans 6 to 43; that stretch reads QRELIREFLAVTSATSAAAETYLERNHWSLDHALDDFY. The DCUN1 domain maps to 54–250; it reads QYSAELVATF…VIDEYYEWVK (197 aa).

Its function is as follows. May contribute to neddylation of cullin components of SCF-type E3 ubiquitin ligase complexes. Neddylation of cullins play an essential role in the regulation of SCF-type complexes activity. This Eremothecium gossypii (strain ATCC 10895 / CBS 109.51 / FGSC 9923 / NRRL Y-1056) (Yeast) protein is Defective in cullin neddylation protein 1 (DCN1).